Reading from the N-terminus, the 138-residue chain is Mu-like prophage FluMu G protein 2 (138 aa).

It to phage Mu protein G.

The polypeptide is Mu-like prophage FluMu G protein 2 (Haemophilus influenzae (strain ATCC 51907 / DSM 11121 / KW20 / Rd)).